Consider the following 453-residue polypeptide: DNA repair protein RadA (453 aa).

The segment at 10–27 (CQECGYQSPKYLGRCPNC) adopts a C4-type zinc-finger fold. 95-102 (GDPGIGKS) provides a ligand contact to ATP. Positions 251–255 (KNRFG) match the RadA KNRFG motif motif. The segment at 350-453 (DAYLKSAGGV…VGQVLKAVFS (104 aa)) is lon-protease-like.

The protein belongs to the RecA family. RadA subfamily.

In terms of biological role, DNA-dependent ATPase involved in processing of recombination intermediates, plays a role in repairing DNA breaks. Stimulates the branch migration of RecA-mediated strand transfer reactions, allowing the 3' invading strand to extend heteroduplex DNA faster. Binds ssDNA in the presence of ADP but not other nucleotides, has ATPase activity that is stimulated by ssDNA and various branched DNA structures, but inhibited by SSB. Does not have RecA's homology-searching function. In Streptococcus pyogenes serotype M3 (strain ATCC BAA-595 / MGAS315), this protein is DNA repair protein RadA.